Reading from the N-terminus, the 154-residue chain is Myoglobin (154 aa).

One can recognise a Globin domain in the interval 2–148 (GLSDGEWQLV…FRKDMASNYK (147 aa)). S4 is subject to Phosphoserine. H65 contributes to the nitrite binding site. H65 serves as a coordination point for O2. Phosphothreonine is present on T68. H94 contacts heme b.

Belongs to the globin family. As to quaternary structure, monomeric.

The protein localises to the cytoplasm. The protein resides in the sarcoplasm. The catalysed reaction is Fe(III)-heme b-[protein] + nitric oxide + H2O = Fe(II)-heme b-[protein] + nitrite + 2 H(+). It catalyses the reaction H2O2 + AH2 = A + 2 H2O. In terms of biological role, monomeric heme protein which primary function is to store oxygen and facilitate its diffusion within muscle tissues. Reversibly binds oxygen through a pentacoordinated heme iron and enables its timely and efficient release as needed during periods of heightened demand. Depending on the oxidative conditions of tissues and cells, and in addition to its ability to bind oxygen, it also has a nitrite reductase activity whereby it regulates the production of bioactive nitric oxide. Under stress conditions, like hypoxia and anoxia, it also protects cells against reactive oxygen species thanks to its pseudoperoxidase activity. The sequence is that of Myoglobin (MB) from Gorilla gorilla beringei (Mountain gorilla).